Consider the following 887-residue polypeptide: Collagen alpha-2(I) chain (887 aa).

Positions 1–42 are enriched in low complexity; that stretch reads GPMGIMGPRGPPGASGAPGPQGFQGPPGEPGEPGQTGPAGAR. The interval 1–887 is disordered; the sequence is GPMGIMGPRG…PGPPGPPGPS (887 aa). Residues 51-65 are compositionally biased toward basic and acidic residues; sequence AGEDGHPGKPGRSGE. Low complexity-rich tracts occupy residues 126 to 155, 170 to 194, 221 to 236, 278 to 290, 368 to 388, 444 to 455, and 473 to 503; these read VGAP…SAGP, PVGS…VSGP, PGPV…RGIV, IRGS…IPGA, AGIA…AQGP, PGESGAAGPTGP, and EPGV…IPGP. Residues 504-517 are compositionally biased toward basic and acidic residues; sequence KGEKGEPGIRRDGA. 6 stretches are compositionally biased toward low complexity: residues 518–533, 560–580, 595–605, 658–673, 690–720, and 766–782; these read RGAP…AGAN, VGPA…QPGA, ATGFPGAAGRT, PGPQ…IGIP, EPGP…APGE, and EPGP…VGPR. Residues 791 to 802 are compositionally biased toward basic and acidic residues; sequence RGDKGEPGDKGP. Residues 872–887 are compositionally biased toward pro residues; the sequence is AGPPGPPGPPGPPGPS.

This sequence belongs to the fibrillar collagen family. As to quaternary structure, trimers of one alpha 2(I) and two alpha 1(I) chains. Interacts (via C-terminus) with TMEM131 (via PapD-L domain); the interaction is direct and is involved in assembly and TRAPPIII ER-to-Golgi transport complex-dependent secretion of collagen. In terms of processing, prolines at the third position of the tripeptide repeating unit (G-X-Y) are hydroxylated in some or all of the chains. In terms of tissue distribution, forms the fibrils of tendon, ligaments and bones. In bones, the fibrils are mineralized with calcium hydroxyapatite.

The protein resides in the secreted. It localises to the extracellular space. The protein localises to the extracellular matrix. Type I collagen is a member of group I collagen (fibrillar forming collagen). This chain is Collagen alpha-2(I) chain, found in Hippopotamus amphibius (Hippopotamus).